Consider the following 225-residue polypeptide: Cardiotrophin-like cytokine factor 1 (225 aa).

The N-terminal stretch at 1-27 (MDLRAGDSWGMLACLCTVLWHLPAVPA) is a signal peptide. A glycan (N-linked (GlcNAc...) asparagine) is linked at asparagine 29.

This sequence belongs to the IL-6 superfamily. In terms of assembly, forms a heteromeric complex with cardiotrophin-like cytokine CRLF1/CLF-1; the CRLF1-CLCF1 complex is a ligand for the ciliary neurotrophic factor receptor/CNTFR. The CRLF1-CLCF1 heterodimer binds SORL1 (via N-terminal ectodomain); within this complex, the interaction is mediated predominantly by the CRLF1 moiety. The tripartite signaling complex formed by CRLF1, CLCF1 and CNTFR also binds SORL1. As to expression, expressed predominantly in lymph nodes, spleen, peripheral blood lymphocytes, bone marrow, and fetal liver.

Its subcellular location is the secreted. Its function is as follows. In complex with CRLF1, forms a heterodimeric neurotropic cytokine that plays a crucial role during neuronal development. Also stimulates B-cells. Binds to and activates the ILST/gp130 receptor. The protein is Cardiotrophin-like cytokine factor 1 (CLCF1) of Homo sapiens (Human).